The primary structure comprises 204 residues: Peptidyl-tRNA hydrolase (204 aa).

Residue Tyr-14 coordinates tRNA. The Proton acceptor role is filled by His-19. 3 residues coordinate tRNA: Phe-64, Asn-66, and Asn-112.

Belongs to the PTH family. As to quaternary structure, monomer.

It localises to the cytoplasm. The catalysed reaction is an N-acyl-L-alpha-aminoacyl-tRNA + H2O = an N-acyl-L-amino acid + a tRNA + H(+). In terms of biological role, hydrolyzes ribosome-free peptidyl-tRNAs (with 1 or more amino acids incorporated), which drop off the ribosome during protein synthesis, or as a result of ribosome stalling. Functionally, catalyzes the release of premature peptidyl moieties from peptidyl-tRNA molecules trapped in stalled 50S ribosomal subunits, and thus maintains levels of free tRNAs and 50S ribosomes. The chain is Peptidyl-tRNA hydrolase from Azorhizobium caulinodans (strain ATCC 43989 / DSM 5975 / JCM 20966 / LMG 6465 / NBRC 14845 / NCIMB 13405 / ORS 571).